Consider the following 210-residue polypeptide: Noranthrone monooxygenase (210 aa).

4 consecutive transmembrane segments (helical) span residues 59–79, 105–125, 131–151, and 188–208; these read TGSFLTGAMMNLHLLTIPILI, GIALVTGALYGYAAWAKYSVG, WMVAGVTTVSMVPYTWMFMNA, and VRALFPLAGSVMGMLGVCGVV.

Belongs to the anthrone oxygenase family.

It is found in the membrane. The enzyme catalyses noranthrone + O2 = norsolorinic acid + H2O. It participates in mycotoxin biosynthesis; aflatoxin biosynthesis. Its function is as follows. Monooxygenase that converts norsolorinic acid anthrone to norsolorinic acid during aflatoxin biosynthesis. This is Noranthrone monooxygenase (hypC) from Aspergillus flavus (strain ATCC 200026 / FGSC A1120 / IAM 13836 / NRRL 3357 / JCM 12722 / SRRC 167).